The following is a 289-amino-acid chain: MKIGCHGLVWTGHFDAEGIRYSVQKTREAGFDLVEFPLMDPFSFDVQTAKSALAEHGLAASASLGLSDATDVSSEDPAVVKAGEELLNRAVDVLAELGATDFCGVIYSAMKKYMEPATAAGLANSKAAVGRVADRASDLGINVSLEVVNRYETNVLNTGRQALAYLEELNRPNLGIHLDTYHMNIEESDMFSPILDTAEALRYVHIGESHRGYLGTGSVDFDTFFKALGRIGYDGPVVFESFSSSVVAPDLSRMLGIWRNLWADNEELGAHANAFIRDKLTAIKTIELH.

Catalysis depends on Glu146, which acts as the Proton donor/acceptor. Glu146 serves as a coordination point for Mn(2+). Residues Glu152 and 179–182 (DTYH) each bind substrate. Residues Asp179 and His205 each coordinate Mn(2+). Arg211 provides a ligand contact to substrate. Residue Glu240 is the Proton donor/acceptor of the active site. A Mn(2+)-binding site is contributed by Glu240.

It belongs to the hyi family. Homotetramer. Requires Mg(2+) as cofactor. Mn(2+) serves as cofactor. It depends on Co(2+) as a cofactor.

It catalyses the reaction L-ribulose = L-xylulose. The catalysed reaction is D-allulose = keto-D-fructose. It carries out the reaction keto-L-tagatose = keto-L-sorbose. The enzyme catalyses D-ribulose = D-xylulose. It catalyses the reaction L-allulose = keto-L-fructose. The catalysed reaction is keto-D-tagatose = keto-D-sorbose. Catalyzes the reversible C-3 epimerization of several ketoses. Shows the highest enzymatic activity for the epimerization of L-ribulose to L-xylulose. Is also able to convert D-allulose (also known as D-psicose) to D-fructose and, to a lesser extent, L-tagatose to L-sorbose, D-ribulose to D-xylulose, L-allulose to L-fructose and D-tagatose to D-sorbose. The sequence is that of Ketose 3-epimerase from Arthrobacter globiformis.